The sequence spans 441 residues: UDP-N-acetylglucosamine 1-carboxyvinyltransferase 1 (441 aa).

42 to 43 (KN) provides a ligand contact to phosphoenolpyruvate. UDP-N-acetyl-alpha-D-glucosamine is bound at residue Arg117. Catalysis depends on Cys141, which acts as the Proton donor. Cys141 is modified (2-(S-cysteinyl)pyruvic acid O-phosphothioketal). UDP-N-acetyl-alpha-D-glucosamine contacts are provided by Asp330 and Ile352.

Belongs to the EPSP synthase family. MurA subfamily.

The protein resides in the cytoplasm. The catalysed reaction is phosphoenolpyruvate + UDP-N-acetyl-alpha-D-glucosamine = UDP-N-acetyl-3-O-(1-carboxyvinyl)-alpha-D-glucosamine + phosphate. It functions in the pathway cell wall biogenesis; peptidoglycan biosynthesis. Cell wall formation. Adds enolpyruvyl to UDP-N-acetylglucosamine. The chain is UDP-N-acetylglucosamine 1-carboxyvinyltransferase 1 from Symbiobacterium thermophilum (strain DSM 24528 / JCM 14929 / IAM 14863 / T).